The following is a 236-amino-acid chain: NAD(P)H-hydrate epimerase (236 aa).

The region spanning 11–217 (AAALDQELMS…AIASKYGFEV (207 aa)) is the YjeF N-terminal domain. Position 61–65 (61–65 (NNGGD)) interacts with (6S)-NADPHX. N62 and D123 together coordinate K(+). (6S)-NADPHX-binding positions include 127 to 133 (GFSFSGE) and D156. Residue S159 coordinates K(+).

This sequence belongs to the NnrE/AIBP family. The cofactor is K(+).

The protein localises to the cytoplasm. It is found in the mitochondrion. It catalyses the reaction (6R)-NADHX = (6S)-NADHX. The catalysed reaction is (6R)-NADPHX = (6S)-NADPHX. Catalyzes the epimerization of the S- and R-forms of NAD(P)HX, a damaged form of NAD(P)H that is a result of enzymatic or heat-dependent hydration. This is a prerequisite for the S-specific NAD(P)H-hydrate dehydratase to allow the repair of both epimers of NAD(P)HX. The protein is NAD(P)H-hydrate epimerase of Fusarium vanettenii (strain ATCC MYA-4622 / CBS 123669 / FGSC 9596 / NRRL 45880 / 77-13-4) (Fusarium solani subsp. pisi).